Here is a 1471-residue protein sequence, read N- to C-terminus: Myosin-51 (1471 aa).

Positions 7–61 (SVGSECWVSNNNGHWDAARLIEIKDNGGGKVVATVAKSSGVLETVNYQQLQNRNI) constitute a Myosin N-terminal SH3-like domain. In terms of domain architecture, Myosin motor spans 65–749 (ESPSDLTNLP…VIGNFEEAHR (685 aa)). 159-166 (GESGAGKT) is an ATP binding site. The actin-binding stretch occupies residues 628–650 (LSQLMTTVSSTNVHYIRCIKPNE). IQ domains are found at residues 753–773 (SKST…KEYQ), 776–796 (VKFI…QRFE), 801–821 (ERAA…KRYL), 824–844 (IKCA…SRYI), 849–869 (ESSA…KTFR), and 872–892 (KKSV…RYLR). Residues 909–952 (KNLQASITEVSKQLKSNSKKVTVLRNKLNILNNSLSKWKCLIKK) are a coiled coil. Positions 1171–1417 (EKPLQAVLYW…SKAVEALSCK (247 aa)) constitute a Dilute domain.

This sequence belongs to the TRAFAC class myosin-kinesin ATPase superfamily. Myosin family.

Its subcellular location is the cytoplasm. Its function is as follows. Involved in cytokinesis. This chain is Myosin-51 (myo51), found in Schizosaccharomyces pombe (strain 972 / ATCC 24843) (Fission yeast).